The primary structure comprises 335 residues: Nucleoid-associated protein PSEEN4449 (335 aa).

The protein belongs to the YejK family.

The protein resides in the cytoplasm. It localises to the nucleoid. The protein is Nucleoid-associated protein PSEEN4449 of Pseudomonas entomophila (strain L48).